Consider the following 269-residue polypeptide: Ribonuclease HII (269 aa).

An RNase H type-2 domain is found at 79 to 269; it reads TYLAGADEVG…SFLKNILNTF (191 aa). The a divalent metal cation site is built by Asp-85, Glu-86, and Asp-182.

The protein belongs to the RNase HII family. Mn(2+) is required as a cofactor. Requires Mg(2+) as cofactor.

Its subcellular location is the cytoplasm. The enzyme catalyses Endonucleolytic cleavage to 5'-phosphomonoester.. Endonuclease that specifically degrades the RNA of RNA-DNA hybrids. The chain is Ribonuclease HII from Clostridium novyi (strain NT).